The following is a 673-amino-acid chain: Estrogen receptor beta (673 aa).

The modulating stretch occupies residues 1 to 181; it reads MASSPGLDPH…SAVGKADMHF (181 aa). NR C4-type zinc fingers lie at residues 182-202 and 218-242; these read CAVC…CEGC and CPAT…LRKC. Residues 182-247 constitute a DNA-binding region (nuclear receptor); sequence CAVCHDYASG…RLRKCYEVGM (66 aa). The 237-residue stretch at 316 to 552 folds into the NR LBD domain; the sequence is SPEEFISRIM…DLLLEMLDAN (237 aa). A disordered region spans residues 553–602; it reads TSSGGSQPSSSPSSETYSDQHQYPQPPSHLHPGSEQTTADHAIVPPLGPT. A compositionally biased stretch (low complexity) spans 554 to 566; that stretch reads SSGGSQPSSSPSS.

This sequence belongs to the nuclear hormone receptor family. NR3 subfamily. Binds DNA as a homodimer. Can form a heterodimer with ER-alpha. In terms of tissue distribution, abundant in the liver and testes, less abundant in the ovary and barely detectable in the muscle.

It localises to the nucleus. Binds estrogens with an affinity similar to that of ER-alpha, and activates expression of reporter genes containing estrogen response elements (ERE) in an estrogen-dependent manner. The sequence is that of Estrogen receptor beta (esr2) from Micropogonias undulatus (Atlantic croaker).